A 122-amino-acid chain; its full sequence is Large ribosomal subunit protein uL14 (122 aa).

The protein belongs to the universal ribosomal protein uL14 family. Part of the 50S ribosomal subunit. Forms a cluster with proteins L3 and L19. In the 70S ribosome, L14 and L19 interact and together make contacts with the 16S rRNA in bridges B5 and B8.

Binds to 23S rRNA. Forms part of two intersubunit bridges in the 70S ribosome. This is Large ribosomal subunit protein uL14 from Campylobacter jejuni subsp. jejuni serotype O:6 (strain 81116 / NCTC 11828).